Consider the following 220-residue polypeptide: 7-cyano-7-deazaguanine synthase (220 aa).

7–17 contacts ATP; it reads LSGGMDSSTLA. Positions 187, 195, 198, and 201 each coordinate Zn(2+).

Belongs to the QueC family. Zn(2+) is required as a cofactor.

It catalyses the reaction 7-carboxy-7-deazaguanine + NH4(+) + ATP = 7-cyano-7-deazaguanine + ADP + phosphate + H2O + H(+). Its pathway is purine metabolism; 7-cyano-7-deazaguanine biosynthesis. Catalyzes the ATP-dependent conversion of 7-carboxy-7-deazaguanine (CDG) to 7-cyano-7-deazaguanine (preQ(0)). The polypeptide is 7-cyano-7-deazaguanine synthase (Methanospirillum hungatei JF-1 (strain ATCC 27890 / DSM 864 / NBRC 100397 / JF-1)).